The chain runs to 247 residues: DNA polymerase sliding clamp (247 aa).

The protein belongs to the PCNA family. Homotrimer. The subunits circularize to form a toroid; DNA passes through its center. Replication factor C (RFC) is required to load the toroid on the DNA.

Its function is as follows. Sliding clamp subunit that acts as a moving platform for DNA processing. Responsible for tethering the catalytic subunit of DNA polymerase and other proteins to DNA during high-speed replication. The sequence is that of DNA polymerase sliding clamp from Thermofilum pendens (strain DSM 2475 / Hrk 5).